The chain runs to 487 residues: mRNA cleavage and polyadenylation factor CLP1 (487 aa).

Residues E19, K59, and 134–139 (NSGKTT) each bind ATP.

It belongs to the Clp1 family. Clp1 subfamily. As to quaternary structure, component of a pre-mRNA cleavage factor complex. Interacts directly with PCF11.

It is found in the nucleus. Functionally, required for endonucleolytic cleavage during polyadenylation-dependent pre-mRNA 3'-end formation. The sequence is that of mRNA cleavage and polyadenylation factor CLP1 from Laccaria bicolor (strain S238N-H82 / ATCC MYA-4686) (Bicoloured deceiver).